The chain runs to 456 residues: Anthocyanidin 3-O-glucosyltransferase UFGT (456 aa).

Residue serine 18 participates in kaempferol binding. A quercetin-binding site is contributed by serine 18. Threonine 19 contacts UDP. Threonine 19 serves as a coordination point for UDP-alpha-D-glucose. Kaempferol contacts are provided by histidine 20 and glutamine 84. Histidine 20 (proton acceptor) is an active-site residue. Glutamine 84 provides a ligand contact to quercetin. Aspartate 119 functions as the Charge relay in the catalytic mechanism. Residue threonine 141 coordinates UDP-alpha-D-glucose. Kaempferol-binding residues include histidine 150 and glutamine 188. Histidine 150 and glutamine 188 together coordinate quercetin. Positions 280, 306, 332, 333, and 350 each coordinate UDP. Threonine 280, serine 306, tryptophan 332, alanine 333, histidine 350, tryptophan 353, asparagine 354, serine 355, and glutamate 358 together coordinate UDP-alpha-D-glucose. Residues asparagine 354, serine 355, and glutamate 358 each contribute to the UDP site. Quercetin is bound at residue glycine 373. Positions 374 and 375 each coordinate UDP-alpha-D-glucose.

This sequence belongs to the UDP-glycosyltransferase family. In terms of tissue distribution, detected only in berry skin.

The enzyme catalyses an anthocyanidin + UDP-alpha-D-glucose + H(+) = an anthocyanidin 3-O-beta-D-glucoside + UDP. The catalysed reaction is cyanidin + UDP-alpha-D-glucose = cyanidin 3-O-beta-D-glucoside + UDP + H(+). It catalyses the reaction delphinidin + UDP-alpha-D-glucose = delphinidin 3-O-beta-D-glucoside + UDP. It carries out the reaction peonidin + UDP-alpha-D-glucose = peonidin 3-O-beta-D-glucoside + UDP. The enzyme catalyses pelargonidin + UDP-alpha-D-glucose = pelargonidin 3-O-beta-D-glucoside + UDP. The catalysed reaction is malvidin + UDP-alpha-D-glucose = malvidin 3-O-beta-D-glucoside + UDP. It catalyses the reaction a flavonol + UDP-alpha-D-glucose = a flavonol 3-O-beta-D-glucoside + UDP + H(+). It functions in the pathway pigment biosynthesis; anthocyanin biosynthesis. Inhibited by Mn(2+) and Zn(2+). Functionally, in the presence of other necessary color factors, this glycosylation reaction allows the accumulation of anthocyanin pigments. Involved in the formation of red wine pigments. UDP-glucose (UDP-Glc) is the physiological sugar donor, and cyanidin is the natural acceptor in vivo. Can glucosylate the anthocyanidins delphinidin, peonidin, pelargonidin and malvidin. The flavonols quercitin and kaempferol can also be glucosylated in vitro, but with glucosylation rates 50-100 times lower than cyanidin. In vitro, can use UDP-Glc, UDP-5SGlc, UDP-Xyl, UDP-Man, UDP-Gal, UDP-GlcNAc, GDP-Glc, dTDP-Glc and dTDP-Xyl as sugar donors, but not UDP-6OMeGal, UDP-Ara, UDP-6FGal, UDP-GlcN, UDP-2FGal, UDP-5SAra, GDP-Man, GDP-Fuc, UDP-Fuc or UDP-Rha. The chain is Anthocyanidin 3-O-glucosyltransferase UFGT from Vitis vinifera (Grape).